Consider the following 240-residue polypeptide: tRNA (guanine-N(1)-)-methyltransferase (240 aa).

S-adenosyl-L-methionine contacts are provided by residues glycine 110 and 129–134 (LGDFVL).

It belongs to the RNA methyltransferase TrmD family. Homodimer.

The protein localises to the cytoplasm. The enzyme catalyses guanosine(37) in tRNA + S-adenosyl-L-methionine = N(1)-methylguanosine(37) in tRNA + S-adenosyl-L-homocysteine + H(+). Its function is as follows. Specifically methylates guanosine-37 in various tRNAs. In Clostridium botulinum (strain Kyoto / Type A2), this protein is tRNA (guanine-N(1)-)-methyltransferase.